We begin with the raw amino-acid sequence, 205 residues long: N-(5'-phosphoribosyl)anthranilate isomerase (205 aa).

It belongs to the TrpF family.

The enzyme catalyses N-(5-phospho-beta-D-ribosyl)anthranilate = 1-(2-carboxyphenylamino)-1-deoxy-D-ribulose 5-phosphate. The protein operates within amino-acid biosynthesis; L-tryptophan biosynthesis; L-tryptophan from chorismate: step 3/5. This is N-(5'-phosphoribosyl)anthranilate isomerase from Thiobacillus denitrificans (strain ATCC 25259 / T1).